Here is a 392-residue protein sequence, read N- to C-terminus: Leucine aminopeptidase 1 (392 aa).

An N-terminal signal peptide occupies residues 1-18 (MKFSQASLLAACLPAISA). Positions 19–82 (RFIETAEADN…LGSTRLNAQT (64 aa)) are excised as a propeptide. Asn-174 carries an N-linked (GlcNAc...) asparagine glycan. Zn(2+) contacts are provided by His-182, Asp-201, Glu-240, and Asp-267. Cysteines 316 and 320 form a disulfide. His-349 contributes to the Zn(2+) binding site.

It belongs to the peptidase M28 family. M28E subfamily. Monomer. Requires Zn(2+) as cofactor.

The protein resides in the secreted. Functionally, extracellular aminopeptidase that allows assimilation of proteinaceous substrates. The sequence is that of Leucine aminopeptidase 1 (LAP1) from Fusarium vanettenii (strain ATCC MYA-4622 / CBS 123669 / FGSC 9596 / NRRL 45880 / 77-13-4) (Fusarium solani subsp. pisi).